Here is a 31-residue protein sequence, read N- to C-terminus: Cyclotide cter-C (31 aa).

Positions 1–31 (GVPCAESCVWIPCTVTALLGCSCKDKVCYLD) form a cross-link, cyclopeptide (Gly-Asp). 3 disulfide bridges follow: Cys4-Cys21, Cys8-Cys23, and Cys13-Cys28.

In terms of processing, contains 3 disulfide bonds. Post-translationally, this is a cyclic peptide.

Probably participates in a plant defense mechanism. This is Cyclotide cter-C from Clitoria ternatea (Butterfly pea).